The following is a 563-amino-acid chain: Membrane protein insertase YidC (563 aa).

Residues 6–26 traverse the membrane as a helical segment; sequence TVLWMIFSFSLLLLWNNWQIH. The interval 36-70 is disordered; that stretch reads PAPEAAATQQPKADANGTAASSTASIPSSPAAAPA. Over residues 54 to 70 the composition is skewed to low complexity; that stretch reads AASSTASIPSSPAAAPA. The next 4 helical transmembrane spans lie at 373–393, 443–463, 482–502, and 512–532; these read WGWT…PLAA, LPMV…LASV, PFFI…KLNP, and VMMI…AGLV.

It belongs to the OXA1/ALB3/YidC family. Type 1 subfamily. As to quaternary structure, interacts with the Sec translocase complex via SecD. Specifically interacts with transmembrane segments of nascent integral membrane proteins during membrane integration.

The protein localises to the cell membrane. Required for the insertion and/or proper folding and/or complex formation of integral membrane proteins into the membrane. Involved in integration of membrane proteins that insert both dependently and independently of the Sec translocase complex, as well as at least some lipoproteins. Aids folding of multispanning membrane proteins. This Bordetella bronchiseptica (strain ATCC BAA-588 / NCTC 13252 / RB50) (Alcaligenes bronchisepticus) protein is Membrane protein insertase YidC.